The primary structure comprises 120 residues: Seripauperin-20 (120 aa).

Residues 7–25 (IAAGVAAIAAGASATTTLA) form a helical membrane-spanning segment.

It belongs to the SRP1/TIP1 family. Seripauperin subfamily.

It localises to the membrane. The sequence is that of Seripauperin-20 (PAU20) from Saccharomyces cerevisiae (strain ATCC 204508 / S288c) (Baker's yeast).